The following is a 258-amino-acid chain: Tegument protein VP22 (258 aa).

The segment at 66-143 (VQPAARGRDR…RAPPGANAVA (78 aa)) is disordered. Residues 77 to 118 (AAAGTTVAAPAAAPARRSSSRASSRPPRAAADPPVLRPATRG) show a composition bias toward low complexity. The Nuclear localization signal signature appears at 131–134 (PRPR). Positions 204–216 (LDRMLKSAAIRIL) match the Nuclear export signal motif. The interval 234–258 (RAQRPAARGSTSGGESRLRGERARP) is disordered. The span at 249-258 (SRLRGERARP) shows a compositional bias: basic and acidic residues.

This sequence belongs to the alphaherpesvirinae VP22 tegument protein family. In terms of assembly, interacts with gE (via C-terminus); this interaction is necessary for the recruitment of VP22 to the Golgi and its packaging into virions. Interacts with gM (via C-terminus). Interacts with VP16; this interaction allows the formation of a tripartite complex composed of VP16, VP22 and UL41/VHS. Interacts with the capsid-binding protein UL16. Interacts with host CGAS. In terms of processing, highly phosphorylated in the host cell. Packaging is selective for underphosphorylated forms.

It localises to the virion tegument. Its subcellular location is the host cytoplasm. The protein resides in the host nucleus. It is found in the host Golgi apparatus. Functionally, tegument protein that plays different roles during the time course of infection. Participates in both the accumulation of viral mRNAs and viral protein translation at late time of infection. Modulates the RNase activity of the virion host shutoff protein UL41 probably to ensure necessary levels of key cellular mRNAs and proteins. Plays a role in microtubule reorganization that occurs after viral infection by stabilizing microtubule network. Plays a role in the inhibition of host innate immune system by targeting the CGAS enzymatic activity which is the principal cytosolic DNA sensor that detects invading viral DNA. Acts by mediating disruption of liquid-like droplets in which CGAS is activated, thereby preventing CGAS activity. The sequence is that of Tegument protein VP22 from Bovine herpesvirus 1.1 (strain Cooper) (BoHV-1).